The sequence spans 626 residues: Endoglucanase 19 (626 aa).

Residues 1–23 (MGSRTTISILVVLLLGLVQLAIS) form the signal peptide. D79 (nucleophile) is an active-site residue. Active-site residues include H412, D464, and E473. The tract at residues 515-536 (APVPQRKPTKPPAASSPSPITI) is disordered. Residues 526–536 (PAASSPSPITI) show a composition bias toward low complexity. N-linked (GlcNAc...) asparagine glycans are attached at residues N560 and N622.

Belongs to the glycosyl hydrolase 9 (cellulase E) family.

The protein resides in the secreted. The catalysed reaction is Endohydrolysis of (1-&gt;4)-beta-D-glucosidic linkages in cellulose, lichenin and cereal beta-D-glucans.. This chain is Endoglucanase 19, found in Arabidopsis thaliana (Mouse-ear cress).